The primary structure comprises 119 residues: uncharacterized protein (119 aa).

The first 18 residues, 1 to 18 (MPAVFMLASSSALQCGRG), serve as a signal peptide directing secretion. The tract at residues 23–100 (PRTEVGAGHS…MFPGPLRGPA (78 aa)) is disordered. A compositionally biased stretch (polar residues) spans 43 to 71 (GNQTSVIPATSRQAALGTSWTQRRTQPLQ). N44 carries N-linked (GlcNAc...) asparagine glycosylation.

Its subcellular location is the secreted. This is an uncharacterized protein from Homo sapiens (Human).